Reading from the N-terminus, the 136-residue chain is uncharacterized protein (136 aa).

It to E.coli YcgX and YdfO.

This is an uncharacterized protein from Escherichia coli (strain K12).